A 252-amino-acid polypeptide reads, in one-letter code: 3-dehydroquinate dehydratase (252 aa).

Residues serine 21, 46 to 48 (EWR), and arginine 82 contribute to the 3-dehydroquinate site. Histidine 143 acts as the Proton donor/acceptor in catalysis. Lysine 170 acts as the Schiff-base intermediate with substrate in catalysis. 3 residues coordinate 3-dehydroquinate: arginine 213, serine 232, and glutamine 236.

This sequence belongs to the type-I 3-dehydroquinase family. In terms of assembly, homodimer.

It carries out the reaction 3-dehydroquinate = 3-dehydroshikimate + H2O. Its pathway is metabolic intermediate biosynthesis; chorismate biosynthesis; chorismate from D-erythrose 4-phosphate and phosphoenolpyruvate: step 3/7. Involved in the third step of the chorismate pathway, which leads to the biosynthesis of aromatic amino acids. Catalyzes the cis-dehydration of 3-dehydroquinate (DHQ) and introduces the first double bond of the aromatic ring to yield 3-dehydroshikimate. The sequence is that of 3-dehydroquinate dehydratase from Salmonella dublin (strain CT_02021853).